Here is a 281-residue protein sequence, read N- to C-terminus: 2-dehydro-3-deoxyphosphooctonate aldolase (281 aa).

It belongs to the KdsA family.

The protein localises to the cytoplasm. The catalysed reaction is D-arabinose 5-phosphate + phosphoenolpyruvate + H2O = 3-deoxy-alpha-D-manno-2-octulosonate-8-phosphate + phosphate. It functions in the pathway carbohydrate biosynthesis; 3-deoxy-D-manno-octulosonate biosynthesis; 3-deoxy-D-manno-octulosonate from D-ribulose 5-phosphate: step 2/3. It participates in bacterial outer membrane biogenesis; lipopolysaccharide biosynthesis. The chain is 2-dehydro-3-deoxyphosphooctonate aldolase from Marinobacter nauticus (strain ATCC 700491 / DSM 11845 / VT8) (Marinobacter aquaeolei).